The sequence spans 356 residues: Non-functional pseudokinase ZRK15 (356 aa).

Residues 62-356 enclose the Protein kinase domain; sequence NRVSELFDEI…SSSSCGETSL (295 aa). Residues 68–76 and Lys-94 each bind ATP; that span reads FDEIPYDWY.

This sequence belongs to the protein kinase superfamily. Ser/Thr protein kinase family. ZRK subfamily. Interacts with RPP13L4/ZAR1.

This chain is Non-functional pseudokinase ZRK15, found in Arabidopsis thaliana (Mouse-ear cress).